The sequence spans 355 residues: Trans-enoyl reductase (355 aa).

45-48 (VDTK) lines the NADP(+) pocket. Residue 131–138 (ISFMTTGL) participates in substrate binding. Residues 166–169 (SSAT), 189–192 (SPRN), tyrosine 207, and 254–255 (LE) contribute to the NADP(+) site. Substrate is bound at residue 275-279 (GPQML). 344–345 (IS) lines the NADP(+) pocket.

This sequence belongs to the zinc-containing alcohol dehydrogenase family. Monomer.

The enzyme catalyses L-serine + 7 malonyl-CoA + acetyl-CoA + 2 S-adenosyl-L-methionine + ATP + 8 NADPH + 11 H(+) = (5S)-3-[(2E,6R,8E,10E,12E)-2,6-dimethyltetradeca-2,8,10,12-tetraenoyl]-5-(hydroxymethyl)pyrrolidine-2,4-dione + AMP + 2 S-adenosyl-L-homocysteine + 7 CO2 + diphosphate + 8 NADP(+) + 8 CoA + 6 H2O. It functions in the pathway mycotoxin biosynthesis. Hybrid PKS-NRPS synthetase; part of the gene cluster that mediates the biosynthesis of trichosetin, a trans-fused decalin-containing tetramic acid with antimicrobial activity. The PKS module of PKS-NRPS1 together with the enoylreductase (ER) catalyze the formation of the polyketide unit which is then conjugated to L-serine by the condensation domain of the PKS-NRPS1 NRPS module. Activity of the Dieckmann cyclase domain (RED) results in release of the Dieckmann product intermediate. Diels-Alderase (DA) is involved in endo-selective Diels-Alder cycloaddition to form the decalin ring, leading to the production of N-desmethylequisetin also called trichosetin. The cluster does not contain the equisetin N-methyltransferase and consequently, trichosetin is isolated as final product. The protein is Trans-enoyl reductase of Gibberella fujikuroi (strain CBS 195.34 / IMI 58289 / NRRL A-6831) (Bakanae and foot rot disease fungus).